Here is a 446-residue protein sequence, read N- to C-terminus: Neuropeptide Y receptor type 5 (446 aa).

Over 1–42 (MDLELQDFYNKTLATENNTAATRNSDFPVWDDYKSSVDDLQY) the chain is Extracellular. 2 N-linked (GlcNAc...) asparagine glycosylation sites follow: N10 and N17. A helical membrane pass occupies residues 43 to 63 (FLIGLYTFVSLLGFMGNLLIL). Residues 64-77 (MALMRKRNQKTMVN) lie on the Cytoplasmic side of the membrane. The chain crosses the membrane as a helical span at residues 78-98 (FLIGNLAFSDILVVLFCSPFT). Over 99–117 (LTSVLLDQWMFGKVMCHIM) the chain is Extracellular. A disulfide bridge links C114 with C198. The chain crosses the membrane as a helical span at residues 118 to 138 (PFLQCVSVLVSTLILISIAIV). The Cytoplasmic portion of the chain corresponds to 139 to 156 (RYHMIKHPISNNLTANHG). A helical membrane pass occupies residues 157 to 177 (YFLIATVWTLGFAICSPLPVF). Over 178–208 (HSLVELQETFDSALLSSRYLCVESWPSDSYR) the chain is Extracellular. A helical transmembrane segment spans residues 209 to 229 (IAFTISLLLVQYILPLVCLTV). The Cytoplasmic segment spans residues 230–369 (SHTSVCRSIS…KKRSRSVFYR (140 aa)). Residues 370-390 (LTILILVFAVSWMPLHLFHVV) traverse the membrane as a helical segment. Over 391 to 407 (TDFNDNLISNRHFKLVY) the chain is Extracellular. The helical transmembrane segment at 408–428 (CICHLLGMMSCCLNPILYGFL) threads the bilayer. The Cytoplasmic portion of the chain corresponds to 429-446 (NNGIKADLISLIQCLHMS). C442 is lipidated: S-palmitoyl cysteine.

The protein belongs to the G-protein coupled receptor 1 family.

It is found in the cell membrane. Receptor for neuropeptide Y and peptide YY. The activity of this receptor is mediated by G proteins that inhibit adenylate cyclase activity. Seems to be associated with food intake. Could be involved in feeding disorders. In Canis lupus familiaris (Dog), this protein is Neuropeptide Y receptor type 5 (NPY5R).